The sequence spans 164 residues: Large ribosomal subunit protein uL10 (164 aa).

Belongs to the universal ribosomal protein uL10 family. As to quaternary structure, part of the ribosomal stalk of the 50S ribosomal subunit. The N-terminus interacts with L11 and the large rRNA to form the base of the stalk. The C-terminus forms an elongated spine to which L12 dimers bind in a sequential fashion forming a multimeric L10(L12)X complex.

In terms of biological role, forms part of the ribosomal stalk, playing a central role in the interaction of the ribosome with GTP-bound translation factors. The polypeptide is Large ribosomal subunit protein uL10 (Helicobacter pylori (strain HPAG1)).